Here is a 484-residue protein sequence, read N- to C-terminus: Monocarboxylate transporter 2 (484 aa).

At 1–16 the chain is on the cytoplasmic side; the sequence is MPSEPSAPLPQPLPPD. Residues 17–37 traverse the membrane as a helical segment; it reads GGWGWVVVCASFISIGFSYAF. Over 38–60 the chain is Extracellular; sequence PKAVTVFFKDIQEIFNTTSSQIA. Residues 61–81 form a helical membrane-spanning segment; that stretch reads WISSIMLAVMYAGGPISSVLV. The Cytoplasmic segment spans residues 82 to 90; sequence NNYGSRPVV. Residues 91–111 traverse the membrane as a helical segment; it reads IVGGLLCCIGMILASYSNSVI. The Extracellular segment spans residues 112-116; sequence ELYLT. A helical membrane pass occupies residues 117–137; that stretch reads VGFIGGLGLAFNLQPALTIIG. Over 138 to 149 the chain is Cytoplasmic; the sequence is KYFYRRRPLANG. Residues 150 to 170 form a helical membrane-spanning segment; the sequence is CAMAGSPVFLSTLAPFNQYLF. Over 171–174 the chain is Extracellular; it reads NNYG. A helical transmembrane segment spans residues 175–195; that stretch reads WKGSFLILGGIFLHSCVAGCL. Residues 196–245 lie on the Cytoplasmic side of the membrane; sequence MRPVGPSPNTKKSKSKVGSRHDSTLKKASKVSTAQKVNRFLDFSLFMHRG. Residues 246 to 266 traverse the membrane as a helical segment; the sequence is FLIYLSGNVILFLGIFAPIIF. Residues 267-281 are Extracellular-facing; it reads LAQYAKHIGVDDYNS. Residues 282–302 form a helical membrane-spanning segment; the sequence is AFLLSVMAFIDMFARPSVGLI. Residues 303-311 are Cytoplasmic-facing; that stretch reads ANTSLIRPR. Residues 312 to 332 form a helical membrane-spanning segment; the sequence is IQYLFSSAIIFTGICHLLCPL. The Extracellular segment spans residues 333–337; the sequence is ATTYS. The chain crosses the membrane as a helical span at residues 338 to 358; sequence ALVVYVVFFGLGFGSISSLLF. Over 359-372 the chain is Cytoplasmic; sequence ECLMDIVGATRFSS. A helical membrane pass occupies residues 373–393; that stretch reads AVGLTTIVECCPVLFGPPLAG. Over 394–405 the chain is Extracellular; the sequence is KLLDITGEYKYL. A helical transmembrane segment spans residues 406-426; the sequence is YIASGTVVLVSGTYLLIGNAI. Over 427 to 484 the chain is Cytoplasmic; sequence NYRLLDKERKREKAKKKKSASHASREMEALNRSKQDEVTVKASNAHNPPSDRDKESNI. The segment at 438–484 is disordered; sequence EKAKKKKSASHASREMEALNRSKQDEVTVKASNAHNPPSDRDKESNI. Basic and acidic residues-rich tracts occupy residues 449–465 and 475–484; these read ASREMEALNRSKQDEVT and PSDRDKESNI.

It belongs to the major facilitator superfamily. Monocarboxylate porter (TC 2.A.1.13) family. Homodimer. Interacts with GRID2IP. Interacts with EMB; interaction mediates SLC16A7 targeting to the plasma membrane. Interacts with isoform 2 of BSG. In terms of tissue distribution, detected in testis and in spermatozoa (at protein level).

The protein localises to the cell membrane. It is found in the cytoplasm. The protein resides in the basolateral cell membrane. It carries out the reaction (S)-lactate(in) + H(+)(in) = (S)-lactate(out) + H(+)(out). It catalyses the reaction 3-methyl-2-oxobutanoate(out) + H(+)(out) = 3-methyl-2-oxobutanoate(in) + H(+)(in). The enzyme catalyses acetoacetate(out) + H(+)(out) = acetoacetate(in) + H(+)(in). The catalysed reaction is (R)-3-hydroxybutanoate(out) + H(+)(out) = (R)-3-hydroxybutanoate(in) + H(+)(in). It carries out the reaction 4-methyl-2-oxopentanoate(out) + H(+)(out) = 4-methyl-2-oxopentanoate(in) + H(+)(in). It catalyses the reaction pyruvate(out) + H(+)(out) = pyruvate(in) + H(+)(in). The enzyme catalyses (S)-3-hydroxybutanoate(out) + H(+)(out) = (S)-3-hydroxybutanoate(in) + H(+)(in). Its activity is regulated as follows. Transport activity exhibits steep dependence on substrate concentration. Substrate concentration sensitivity of SLC16A7 arises from the strong inter-subunit cooperativity of the SLC16A7 dimer during transport. Inhibited by AR-C155858. Functionally, proton-coupled monocarboxylate symporter. Catalyzes the rapid transport across the plasma membrane of monocarboxylates such as L-lactate, pyruvate and ketone bodies, acetoacetate, beta-hydroxybutyrate and acetate. Dimerization is functionally required and both subunits work cooperatively in transporting substrate. The protein is Monocarboxylate transporter 2 (Slc16a7) of Mus musculus (Mouse).